The chain runs to 239 residues: 1-(5-phosphoribosyl)-5-[(5-phosphoribosylamino)methylideneamino] imidazole-4-carboxamide isomerase (239 aa).

The active-site Proton acceptor is the Asp7. Residue Asp129 is the Proton donor of the active site.

This sequence belongs to the HisA/HisF family.

It localises to the cytoplasm. The catalysed reaction is 1-(5-phospho-beta-D-ribosyl)-5-[(5-phospho-beta-D-ribosylamino)methylideneamino]imidazole-4-carboxamide = 5-[(5-phospho-1-deoxy-D-ribulos-1-ylimino)methylamino]-1-(5-phospho-beta-D-ribosyl)imidazole-4-carboxamide. Its pathway is amino-acid biosynthesis; L-histidine biosynthesis; L-histidine from 5-phospho-alpha-D-ribose 1-diphosphate: step 4/9. In Lactiplantibacillus plantarum (strain ATCC BAA-793 / NCIMB 8826 / WCFS1) (Lactobacillus plantarum), this protein is 1-(5-phosphoribosyl)-5-[(5-phosphoribosylamino)methylideneamino] imidazole-4-carboxamide isomerase.